A 253-amino-acid chain; its full sequence is ATP synthase subunit a (253 aa).

6 helical membrane-spanning segments follow: residues 34–54, 89–109, 118–138, 156–178, 203–223, and 226–246; these read SSLFLIIAVFLLLFWTSLSFY, YFPFIFTLHLLLLYCNLIGMI, HIVFTFGLALSIFIGINLIGI, LAIVPLLITIEFLSYIVKVFTLS, LSAGGLLAIFHLIPLALLLAL, and LELAIAGLQAYVFTLLTCIYL.

Belongs to the ATPase A chain family. F-type ATPases have 2 components, CF(1) - the catalytic core - and CF(0) - the membrane proton channel. CF(1) has five subunits: alpha(3), beta(3), gamma(1), delta(1), epsilon(1). CF(0) has three main subunits: a, b and c.

It is found in the mitochondrion inner membrane. Its function is as follows. Mitochondrial membrane ATP synthase (F(1)F(0) ATP synthase or Complex V) produces ATP from ADP in the presence of a proton gradient across the membrane which is generated by electron transport complexes of the respiratory chain. F-type ATPases consist of two structural domains, F(1) - containing the extramembraneous catalytic core and F(0) - containing the membrane proton channel, linked together by a central stalk and a peripheral stalk. During catalysis, ATP synthesis in the catalytic domain of F(1) is coupled via a rotary mechanism of the central stalk subunits to proton translocation. Key component of the proton channel; it may play a direct role in the translocation of protons across the membrane. This Chondrus crispus (Carrageen Irish moss) protein is ATP synthase subunit a (ATP6).